The chain runs to 37 residues: uncharacterized protein (37 aa).

This is an uncharacterized protein from Saccharomyces cerevisiae (strain ATCC 204508 / S288c) (Baker's yeast).